A 429-amino-acid chain; its full sequence is MTDRFLASINAALTDSDPAIAGLIDQERQRQETHLELIASENFTSQAVMQAQGSVLTNKYAEGLPHKRYYGGCEHVDAIEELAIERAQRLFGAAWANVQPHSGAQANFAVFLALLQPGDTIMGMDLSHGGHLTHGSPVNVSGKWFKVVHYGVERDSQQLDMEAVRQLALKERPQLIICGYSAYPRTIDFAAFRSIADEVGAYLLADMAHIAGLVAAGVHPSPIAHCDVVTTTTHKTLRGPRGGLILCRDADFGRKFDKAVFPGSQGGPLEHVIAAKAVALGEALQPEFQVYSCQVVANAQVLAGRIQERGIAVVSGGTDNHLVLLDLRSIGMTGKVADLLVSEVNITANKNTVPFDPESPFVTSGLRLGTAALTTRGFDDEAFREVADVIADRLLKPQDESIKAQCLERVRQLCGRFPLYRDVLQPALA.

Residues Leu126 and 130 to 132 (GHL) each bind (6S)-5,6,7,8-tetrahydrofolate. Lys235 is subject to N6-(pyridoxal phosphate)lysine. Residue 359–361 (SPF) coordinates (6S)-5,6,7,8-tetrahydrofolate.

Belongs to the SHMT family. Homodimer. Pyridoxal 5'-phosphate is required as a cofactor.

The protein resides in the cytoplasm. The enzyme catalyses (6R)-5,10-methylene-5,6,7,8-tetrahydrofolate + glycine + H2O = (6S)-5,6,7,8-tetrahydrofolate + L-serine. It functions in the pathway one-carbon metabolism; tetrahydrofolate interconversion. The protein operates within amino-acid biosynthesis; glycine biosynthesis; glycine from L-serine: step 1/1. Catalyzes the reversible interconversion of serine and glycine with tetrahydrofolate (THF) serving as the one-carbon carrier. This reaction serves as the major source of one-carbon groups required for the biosynthesis of purines, thymidylate, methionine, and other important biomolecules. Also exhibits THF-independent aldolase activity toward beta-hydroxyamino acids, producing glycine and aldehydes, via a retro-aldol mechanism. This Prochlorococcus marinus (strain MIT 9313) protein is Serine hydroxymethyltransferase.